The primary structure comprises 226 residues: MIRILSLNLIGLACGIGLYYDFQNRKHFKEVIDNNIPINGNNIITGTITCENTDIDNIFVHDRLPIPYSMSEDPFSLFELHGKNKIKFYDCDNYYYNDGLRQKYFKIGTVKYFDLWYIEDNFYVEKSNIKINGINLIYDKNLKIFYPKHDYHYLNSNKYLVRKHIPNNSNVTAFGKINKYGMIKIESIGDSYNVIDYVAEKYFGISDIYTSTLSFGLIISLFYLLK.

The helical transmembrane segment at 203–225 threads the bilayer; the sequence is FGISDIYTSTLSFGLIISLFYLL.

It localises to the membrane. This is an uncharacterized protein from Acanthamoeba polyphaga (Amoeba).